Reading from the N-terminus, the 284-residue chain is Four and a half LIM domains protein 5 (284 aa).

The C4-type zinc finger occupies 8-32 (CQYCTASLLGKKYVLKDDNLYCISC). LIM zinc-binding domains lie at 39–100 (NYCE…ECSS), 101–160 (KCFH…KEFA), 161–220 (HYCN…LYAK), and 221–283 (KCAA…ADTD).

As to quaternary structure, interacts with CREM (via the third LIM domain). Interacts (via second LIM domain) with SPAG8.

The protein resides in the nucleus. Its function is as follows. May be involved in the regulation of spermatogenesis. Stimulates CREM transcriptional activity in a phosphorylation-independent manner. The chain is Four and a half LIM domains protein 5 (Fhl5) from Rattus norvegicus (Rat).